The sequence spans 189 residues: Elongation factor P (189 aa).

Lys-34 carries the N6-(3,6-diaminohexanoyl)-5-hydroxylysine modification.

It belongs to the elongation factor P family. May be beta-lysylated on the epsilon-amino group of Lys-34 by the combined action of EpmA and EpmB, and then hydroxylated on the C5 position of the same residue by EpmC (if this protein is present). Lysylation is critical for the stimulatory effect of EF-P on peptide-bond formation. The lysylation moiety may extend toward the peptidyltransferase center and stabilize the terminal 3-CCA end of the tRNA. Hydroxylation of the C5 position on Lys-34 may allow additional potential stabilizing hydrogen-bond interactions with the P-tRNA.

The protein localises to the cytoplasm. It functions in the pathway protein biosynthesis; polypeptide chain elongation. Functionally, involved in peptide bond synthesis. Alleviates ribosome stalling that occurs when 3 or more consecutive Pro residues or the sequence PPG is present in a protein, possibly by augmenting the peptidyl transferase activity of the ribosome. Modification of Lys-34 is required for alleviation. The sequence is that of Elongation factor P from Saccharophagus degradans (strain 2-40 / ATCC 43961 / DSM 17024).